Here is a 201-residue protein sequence, read N- to C-terminus: Small ribosomal subunit protein uS5 (201 aa).

The disordered stretch occupies residues 1–28 (MARGEQQRGEGGQRRDRRDRNAPEERVD). One can recognise an S5 DRBM domain in the interval 31-94 (IVEKLVHINR…EEAKKTMIRV (64 aa)). The interval 173–201 (QIAAKRGKKVGDILGRRADGASAPEAIEG) is disordered. Basic and acidic residues predominate over residues 181 to 191 (KVGDILGRRAD).

This sequence belongs to the universal ribosomal protein uS5 family. Part of the 30S ribosomal subunit. Contacts proteins S4 and S8.

Functionally, with S4 and S12 plays an important role in translational accuracy. Located at the back of the 30S subunit body where it stabilizes the conformation of the head with respect to the body. The chain is Small ribosomal subunit protein uS5 from Caulobacter vibrioides (strain ATCC 19089 / CIP 103742 / CB 15) (Caulobacter crescentus).